A 463-amino-acid chain; its full sequence is MKTVSVKEIYRQTEQYAGQSIRVEGWIRTLRASKAFGFIELNDGTFFKNIQIVFDEDLHNFSDVSKFTISSAIIIEGTLEITPGAKQPFEIKATNVELEAHSHKDYPLQKKRHTFEYLRQIAHLRPRSNAFSAVFRVRSIAAFAIHQFFQEKGFVYTHTPIVTGSDAEGAGEMFRVSTLDFKNIPLDEEQQVDFKKDFFGKETSLTVSGQLAAEAYALAFKKVYTFGPTFRAENSNTARHASEFWMIEPEIAFADLQDNMELAEDMLKYMIRYVMEQAPEELEFFNQFVDKGLIDRLNHVANSEFGKVTYTEAVKMLQESGEEFEYPVEWGHDLQTEHERYLTEKVFKKPVFVMDYPKDIKAFYMRMNDDNKTVAAMDLLVPGIGEIIGGSQREERLDVLTDRMKQMGLDEEEYWWYLELRKYGGVKHAGYGLGFERAIMYLTGMANIRDVISYPRTPKSAEF.

Belongs to the class-II aminoacyl-tRNA synthetase family. As to quaternary structure, homodimer.

It localises to the cytoplasm. The enzyme catalyses tRNA(Asn) + L-asparagine + ATP = L-asparaginyl-tRNA(Asn) + AMP + diphosphate + H(+). This Alkaliphilus metalliredigens (strain QYMF) protein is Asparagine--tRNA ligase.